Reading from the N-terminus, the 153-residue chain is MLMPQNPQIYVDADACPVKPEILKVAERHGLEVTFVANSGLRPSRDPMVKNVIVSAGFDAADDWIAERAAENDIVITADVPLAGRCVAKGALVTGPTGRVFDPSNIGMATAMRDLGAHLRETGESKGYNAAFSPRDRSAFLETLDRFCRRVKK.

Belongs to the UPF0178 family.

The protein is UPF0178 protein Atu1478 of Agrobacterium fabrum (strain C58 / ATCC 33970) (Agrobacterium tumefaciens (strain C58)).